Consider the following 1182-residue polypeptide: DNA-directed RNA polymerase subunit beta' (1182 aa).

4 residues coordinate Zn(2+): cysteine 59, cysteine 61, cysteine 74, and cysteine 77. Mg(2+)-binding residues include aspartate 449, aspartate 451, and aspartate 453. Cysteine 794, cysteine 868, cysteine 875, and cysteine 878 together coordinate Zn(2+).

It belongs to the RNA polymerase beta' chain family. In terms of assembly, the RNAP catalytic core consists of 2 alpha, 1 beta, 1 beta' and 1 omega subunit. When a sigma factor is associated with the core the holoenzyme is formed, which can initiate transcription. Mg(2+) serves as cofactor. It depends on Zn(2+) as a cofactor.

The catalysed reaction is RNA(n) + a ribonucleoside 5'-triphosphate = RNA(n+1) + diphosphate. In terms of biological role, DNA-dependent RNA polymerase catalyzes the transcription of DNA into RNA using the four ribonucleoside triphosphates as substrates. This Clostridium acetobutylicum (strain ATCC 824 / DSM 792 / JCM 1419 / IAM 19013 / LMG 5710 / NBRC 13948 / NRRL B-527 / VKM B-1787 / 2291 / W) protein is DNA-directed RNA polymerase subunit beta'.